We begin with the raw amino-acid sequence, 377 residues long: Exopolygalacturonase (377 aa).

The first 5 residues, 1–5 (RGVQS), serve as a signal peptide directing secretion. PbH1 repeat units follow at residues 159-184 (CEDITFQHVTVTAPGTSINTDGIHVG), 186-207 (SKGVTITNTKIATGDDCISIGP), 209-229 (SQNVTITQVNCGPGHGISIGS), 239-260 (VRGITVKGCTFSGTMNGVRVKT), and 269-290 (ATDLTFQDLTMNNVQNPVILDQ). Asp-200 functions as the Proton donor in the catalytic mechanism. Asn-211 carries N-linked (GlcNAc...) asparagine glycosylation. His-223 is an active-site residue. Asn-345 carries an N-linked (GlcNAc...) asparagine glycan.

Belongs to the glycosyl hydrolase 28 family. Monomer. Glycosylated. As to expression, expressed in pollen (at protein level). Expressed in stem, but not in leaves (at protein level).

The protein resides in the secreted. It is found in the cell wall. The protein localises to the golgi apparatus. Its subcellular location is the endoplasmic reticulum. It localises to the vesicle. It carries out the reaction [(1-&gt;4)-alpha-D-galacturonosyl](n) + H2O = alpha-D-galacturonate + [(1-&gt;4)-alpha-D-galacturonosyl](n-1). May function in depolymerizing pectin during pollen development, germination, and tube growth. Acts as an exo-polygalacturonase. This chain is Exopolygalacturonase, found in Platanus acerifolia (London plane tree).